The sequence spans 365 residues: Probable caffeine synthase 5 (365 aa).

Position 18 (Tyr18) interacts with S-adenosyl-L-homocysteine. Caffeine is bound at residue Thr25. S-adenosyl-L-homocysteine-binding residues include Cys61, Asn66, Asp98, Leu99, Ser134, and Phe135. Positions 152, 155, and 156 each coordinate caffeine. The Mg(2+) site is built by Asn173, Asp259, Phe261, and Asn262. Phe317 serves as a coordination point for caffeine.

Belongs to the methyltransferase superfamily. Type-7 methyltransferase family. Mg(2+) serves as cofactor.

Its pathway is alkaloid biosynthesis. Functionally, may be involved in the biosynthesis of caffeine. This chain is Probable caffeine synthase 5, found in Camellia sinensis (Tea plant).